We begin with the raw amino-acid sequence, 504 residues long: ATP synthase subunit alpha (504 aa).

169 to 176 (GDRGTGKT) serves as a coordination point for ATP.

This sequence belongs to the ATPase alpha/beta chains family. As to quaternary structure, F-type ATPases have 2 components, CF(1) - the catalytic core - and CF(0) - the membrane proton channel. CF(1) has five subunits: alpha(3), beta(3), gamma(1), delta(1), epsilon(1). CF(0) has three main subunits: a(1), b(2) and c(9-12). The alpha and beta chains form an alternating ring which encloses part of the gamma chain. CF(1) is attached to CF(0) by a central stalk formed by the gamma and epsilon chains, while a peripheral stalk is formed by the delta and b chains.

Its subcellular location is the cell inner membrane. The catalysed reaction is ATP + H2O + 4 H(+)(in) = ADP + phosphate + 5 H(+)(out). Its function is as follows. Produces ATP from ADP in the presence of a proton gradient across the membrane. The alpha chain is a regulatory subunit. This Leptospira biflexa serovar Patoc (strain Patoc 1 / Ames) protein is ATP synthase subunit alpha.